Here is a 72-residue protein sequence, read N- to C-terminus: Conotoxin LvVIA (72 aa).

The signal sequence occupies residues 1 to 17 (VLIIAVLFLTASELVTA). A propeptide spanning residues 18-41 (DYTRDKWQYRAASLRDAMRNFRDT) is cleaved from the precursor. Disulfide bonds link Cys44/Cys58, Cys51/Cys63, and Cys57/Cys70.

It belongs to the conotoxin O1 superfamily. As to expression, expressed by the venom duct.

The protein localises to the secreted. This is Conotoxin LvVIA from Conus lividus (Livid cone).